The following is a 310-amino-acid chain: MQQNNSVPEFILLGLTQDPLRQKIVFVIFLIFYMGTVVGNMLIIVTIKSSRTLGSPMYFFLFYLSFADSCFSTSTAPRLIVDALSEKKIITYNECMTQVFALHLFGCMEIFVLILMAVDRYVAICKPLRYPTIMSQQVCIILIVLAWIGSLIHSTAQIILALRLPFCGPYLIDHYCCDLQPLLKLACMDTYMINLLLVSNSGAICSSSFMILIISYIVILHSLRNHSAKGKKKALSACTSHIIVVILFFGPCIFIYTRPPTTFPMDKMVAVFYTIGTPFLNPLIYTLRNAEVKNAMRKLWHGKIISENKG.

The Extracellular segment spans residues 1-23; sequence MQQNNSVPEFILLGLTQDPLRQK. An N-linked (GlcNAc...) asparagine glycan is attached at N4. A helical membrane pass occupies residues 24–47; the sequence is IVFVIFLIFYMGTVVGNMLIIVTI. The Cytoplasmic segment spans residues 48–55; the sequence is KSSRTLGS. Residues 56–77 traverse the membrane as a helical segment; that stretch reads PMYFFLFYLSFADSCFSTSTAP. At 78–98 the chain is on the extracellular side; the sequence is RLIVDALSEKKIITYNECMTQ. C95 and C187 are oxidised to a cystine. The chain crosses the membrane as a helical span at residues 99 to 118; the sequence is VFALHLFGCMEIFVLILMAV. Topologically, residues 119–137 are cytoplasmic; that stretch reads DRYVAICKPLRYPTIMSQQ. The chain crosses the membrane as a helical span at residues 138–156; it reads VCIILIVLAWIGSLIHSTA. Over 157 to 193 the chain is Extracellular; it reads QIILALRLPFCGPYLIDHYCCDLQPLLKLACMDTYMI. Residues 194–217 form a helical membrane-spanning segment; it reads NLLLVSNSGAICSSSFMILIISYI. The Cytoplasmic segment spans residues 218–233; the sequence is VILHSLRNHSAKGKKK. A helical membrane pass occupies residues 234–256; the sequence is ALSACTSHIIVVILFFGPCIFIY. Topologically, residues 257–267 are extracellular; that stretch reads TRPPTTFPMDK. Residues 268-287 form a helical membrane-spanning segment; that stretch reads MVAVFYTIGTPFLNPLIYTL. Over 288–310 the chain is Cytoplasmic; it reads RNAEVKNAMRKLWHGKIISENKG.

Belongs to the G-protein coupled receptor 1 family.

The protein resides in the cell membrane. Functionally, odorant receptor. The protein is Olfactory receptor 4C11 (OR4C11) of Homo sapiens (Human).